Consider the following 101-residue polypeptide: Cell division suppressor protein YneA (101 aa).

Residues 35 to 86 (MTVTVASGDTLWGLAKQYEPAHGLSPDEFIRWVVDVNRLPSSRLTAGEQIVI) form the LysM domain.

This sequence belongs to the YneA family.

The protein resides in the cytoplasm. Functionally, inhibits cell division during the SOS response. Affects a later stage of the cell division protein assembly, after the assembly of the Z ring, by probably suppressing recruitment of FtsL and/or DivIC to the division machinery. This Geobacillus thermodenitrificans (strain NG80-2) protein is Cell division suppressor protein YneA.